We begin with the raw amino-acid sequence, 259 residues long: Kallikrein 1-related peptidase b22 (259 aa).

The N-terminal stretch at 1 to 17 (MRFLILFLTLSLGGIDA) is a signal peptide. Residues 18-24 (APPVQSR) constitute a propeptide, activation peptide. One can recognise a Peptidase S1 domain in the interval 25-256 (ILGGFKCEKN…FTSWIKDTMA (232 aa)). 5 cysteine pairs are disulfide-bonded: Cys31–Cys171, Cys50–Cys66, Cys150–Cys217, Cys182–Cys196, and Cys207–Cys232. His65 acts as the Charge relay system in catalysis. Asn102 is a glycosylation site (N-linked (GlcNAc...) asparagine). The Charge relay system role is filled by Asp118. Ser211 functions as the Charge relay system in the catalytic mechanism.

This sequence belongs to the peptidase S1 family. Kallikrein subfamily.

The enzyme catalyses Preferential cleavage of Arg-|-Xaa bonds in small molecule substrates. Highly selective action to release kallidin (lysyl-bradykinin) from kininogen involves hydrolysis of Met-|-Xaa or Leu-|-Xaa.. Its function is as follows. Glandular kallikreins cleave Met-Lys and Arg-Ser bonds in kininogen to release Lys-bradykinin. The sequence is that of Kallikrein 1-related peptidase b22 (Klk1b22) from Mus musculus (Mouse).